A 226-amino-acid chain; its full sequence is 2,3-bisphosphoglycerate-dependent phosphoglycerate mutase (226 aa).

Residues 8–15, 21–22, R58, 109–112, K120, 136–137, and 180–181 contribute to the substrate site; these read RHGQSVWN, TG, ERMY, RR, and GN. H9 (tele-phosphohistidine intermediate) is an active-site residue. Catalysis depends on E109, which acts as the Proton donor/acceptor.

Belongs to the phosphoglycerate mutase family. BPG-dependent PGAM subfamily.

The catalysed reaction is (2R)-2-phosphoglycerate = (2R)-3-phosphoglycerate. Its pathway is carbohydrate degradation; glycolysis; pyruvate from D-glyceraldehyde 3-phosphate: step 3/5. Its function is as follows. Catalyzes the interconversion of 2-phosphoglycerate and 3-phosphoglycerate. In Chlamydia muridarum (strain MoPn / Nigg), this protein is 2,3-bisphosphoglycerate-dependent phosphoglycerate mutase.